A 78-amino-acid chain; its full sequence is Glycophorin-E (78 aa).

A signal peptide spans 1–19 (MYGKIIFVLLLSGIVSISA). At 20 to 52 (SSTTGVAMHTSTSSSVTKSYISSQTNGITLINW) the chain is on the extracellular side. Residues 53–73 (WAMARVIFEVMLVVVGMIILI) form a helical membrane-spanning segment. The Cytoplasmic portion of the chain corresponds to 74 to 78 (SYCIR).

The protein belongs to the glycophorin-A family. In terms of processing, the N-terminal extracellular domain is heavily glycosylated on serine and threonine residues. Erythrocytes.

Its subcellular location is the membrane. In terms of biological role, this protein is a minor sialoglycoprotein in human erythrocyte membranes. This is Glycophorin-E (GYPE) from Homo sapiens (Human).